A 278-amino-acid polypeptide reads, in one-letter code: Lectin 6 (278 aa).

The first 23 residues, 1-23, serve as a signal peptide directing secretion; that stretch reads MTLSSALIKIFITFLFLQNHVNS. N-linked (GlcNAc...) asparagine glycosylation is found at Asn-116, Asn-139, and Asn-271.

It belongs to the leguminous lectin family.

In terms of biological role, may be involved in arbuscular mycorrhizal (AM) symbiosis with AM fungi. This chain is Lectin 6, found in Medicago truncatula (Barrel medic).